The primary structure comprises 259 residues: Formate channel BtFdhC (259 aa).

Residues 1-26 (MAFHKPEQIAELVIEAGVQKVSQTLP) lie on the Cytoplasmic side of the membrane. Residues 27-47 (AMLILGFLGGAFISLGFLLNI) form a helical membrane-spanning segment. At 48-66 (RVLGNLPERWGSLVNVLGG) the chain is on the periplasmic side. Residues 67–97 (AVFPVGLMLVVLAGGELITGNMMSLSMALYA) form a helical membrane-spanning segment. Residues 98–108 (KKITLVSVLNN) lie on the Cytoplasmic side of the membrane. The helical transmembrane segment at 109–130 (WVWITFMNFVGAIFVAYCFGHL) threads the bilayer. At 131–157 (GGLTEGDYLNKTVAIAEGKLHESFGRT) the chain is on the periplasmic side. The helical transmembrane segment at 158–176 (LILAIGCNWLVCLALWLAY) threads the bilayer. Topologically, residues 177–187 (GTSDFVGKIIG) are cytoplasmic. Residues 188–216 (IWIPIMAFVVIGFQQVVANMFVISAVIFA) form a helical membrane-spanning segment. The Periplasmic segment spans residues 217 to 227 (GHLTWMDLARN). The chain crosses the membrane as a helical span at residues 228–250 (FVPVFIGNVIGGAGFVGFAYFAC). The Cytoplasmic segment spans residues 251 to 259 (YQKQHSNMK).

It belongs to the FNT transporter (TC 1.A.16) family.

It localises to the cell inner membrane. The enzyme catalyses formate(in) = formate(out). In terms of biological role, acts as a formate transporter. This is Formate channel BtFdhC from Bacillus thuringiensis.